The chain runs to 287 residues: Protease HtpX homolog (287 aa).

Transmembrane regions (helical) follow at residues 5–25 and 28–48; these read IRTG…GYWI and GAGA…AYWV. His-131 contributes to the Zn(2+) binding site. Glu-132 is an active-site residue. Zn(2+) is bound at residue His-135. The next 2 helical transmembrane spans lie at 146-166 and 174-194; these read VTAT…FFGG and PFAG…ATLV. Zn(2+) is bound at residue Glu-203.

Belongs to the peptidase M48B family. The cofactor is Zn(2+).

The protein localises to the cell inner membrane. This is Protease HtpX homolog from Acidiphilium cryptum (strain JF-5).